A 34-amino-acid chain; its full sequence is MEEKPKGALAVILVLTLTILVFWLGVYAVFFARG.

An N-formylmethionine modification is found at M1. Residues 4 to 34 (KPKGALAVILVLTLTILVFWLGVYAVFFARG) traverse the membrane as a helical segment.

The protein localises to the cell membrane. The enzyme catalyses 4 Fe(II)-[cytochrome c] + O2 + 8 H(+)(in) = 4 Fe(III)-[cytochrome c] + 2 H2O + 4 H(+)(out). The chain is Cytochrome c oxidase polypeptide 2A (cbaD) from Thermus thermophilus (strain ATCC 27634 / DSM 579 / HB8).